The chain runs to 473 residues: Photosystem II CP43 reaction center protein (473 aa).

Residues 1–14 (MKTLYSLRRFYPVE) constitute a propeptide that is removed on maturation. At T15 the chain carries N-acetylthreonine. T15 is modified (phosphothreonine). Helical transmembrane passes span 69–93 (LFEVAHFVPEKPMYEQGLILLPHLA), 134–155 (LLGPETLEESFPFFGYVWKDRN), 178–200 (KALYFGGVYDTWAPGGGDVRKIT), 255–275 (KPFAWARRALVWSGEAYLSYS), and 291–312 (WFNNTAYPSEFYGPTGPEASQA). [CaMn4O5] cluster is bound at residue E367. Positions 426–473 (LSTSHFVLGFFLFVGHLWHAGRARAAAAGFEKGIDRDFEPVLSMTPLN) are excised as a propeptide. Residues 447 to 471 (RARAAAAGFEKGIDRDFEPVLSMTP) form a helical membrane-spanning segment.

Belongs to the PsbB/PsbC family. PsbC subfamily. As to quaternary structure, PSII is composed of 1 copy each of membrane proteins PsbA, PsbB, PsbC, PsbD, PsbE, PsbF, PsbH, PsbI, PsbJ, PsbK, PsbL, PsbM, PsbT, PsbX, PsbY, PsbZ, Psb30/Ycf12, at least 3 peripheral proteins of the oxygen-evolving complex and a large number of cofactors. It forms dimeric complexes. Requires Binds multiple chlorophylls and provides some of the ligands for the Ca-4Mn-5O cluster of the oxygen-evolving complex. It may also provide a ligand for a Cl- that is required for oxygen evolution. PSII binds additional chlorophylls, carotenoids and specific lipids. as cofactor. In terms of processing, over time a tryptophan in the fifth lumenal loop is converted to 2-hydroxy-2,3-dihydrotryptophan, 2-oxo-2,3-dihydrotryptophan, and kynurenine by oxidizing species from the active site. This oxidation targets the protein for turnover.

Its subcellular location is the plastid. The protein localises to the chloroplast thylakoid membrane. One of the components of the core complex of photosystem II (PSII). It binds chlorophyll and helps catalyze the primary light-induced photochemical processes of PSII. PSII is a light-driven water:plastoquinone oxidoreductase, using light energy to abstract electrons from H(2)O, generating O(2) and a proton gradient subsequently used for ATP formation. The polypeptide is Photosystem II CP43 reaction center protein (Spinacia oleracea (Spinach)).